The chain runs to 426 residues: Histidine--tRNA ligase (426 aa).

Belongs to the class-II aminoacyl-tRNA synthetase family. Homodimer.

It is found in the cytoplasm. It carries out the reaction tRNA(His) + L-histidine + ATP = L-histidyl-tRNA(His) + AMP + diphosphate + H(+). The sequence is that of Histidine--tRNA ligase from Picosynechococcus sp. (strain ATCC 27264 / PCC 7002 / PR-6) (Agmenellum quadruplicatum).